The chain runs to 524 residues: Probable cytochrome P450 519C1 (524 aa).

Residues 1-21 (MNILLLIFYFLVCFLIFDFIK) traverse the membrane as a helical segment. Heme is bound at residue cysteine 470.

The protein belongs to the cytochrome P450 family. The cofactor is heme.

It localises to the membrane. The sequence is that of Probable cytochrome P450 519C1 (cyp519C1) from Dictyostelium discoideum (Social amoeba).